Reading from the N-terminus, the 175-residue chain is Ribosome-binding factor A (175 aa).

Positions 125-175 are disordered; it reads TAKHAGEADPYKSDAPEDVDIDEDDFDEEDIDLAGDDDIDEDANKDADSSK. The segment covering 128–139 has biased composition (basic and acidic residues); that stretch reads HAGEADPYKSDA. The segment covering 140-165 has biased composition (acidic residues); it reads PEDVDIDEDDFDEEDIDLAGDDDIDE. A compositionally biased stretch (basic and acidic residues) spans 166 to 175; sequence DANKDADSSK.

Belongs to the RbfA family. Monomer. Binds 30S ribosomal subunits, but not 50S ribosomal subunits or 70S ribosomes.

The protein localises to the cytoplasm. In terms of biological role, one of several proteins that assist in the late maturation steps of the functional core of the 30S ribosomal subunit. Associates with free 30S ribosomal subunits (but not with 30S subunits that are part of 70S ribosomes or polysomes). Required for efficient processing of 16S rRNA. May interact with the 5'-terminal helix region of 16S rRNA. The polypeptide is Ribosome-binding factor A (Pseudarthrobacter chlorophenolicus (strain ATCC 700700 / DSM 12829 / CIP 107037 / JCM 12360 / KCTC 9906 / NCIMB 13794 / A6) (Arthrobacter chlorophenolicus)).